The chain runs to 957 residues: Glutamyl aminopeptidase (957 aa).

Over 1-18 the chain is Cytoplasmic; the sequence is MNFAEREGSKRYCIQTKH. A helical; Signal-anchor for type II membrane protein membrane pass occupies residues 19–39; the sequence is VAILCAVVVGVGLIVGLAVGL. Residues 40–957 lie on the Extracellular side of the membrane; it reads TRSCDSSGDG…EWFFNLLESG (918 aa). The segment at 44-83 is disordered; that stretch reads DSSGDGGPGTAPAPSHLPSSTASPSGPPAQDQDICPASED. Asn98 is a glycosylation site (N-linked (GlcNAc...) asparagine; atypical). 2 N-linked (GlcNAc...) asparagine glycosylation sites follow: Asn124 and Asn197. Substrate is bound at residue Glu223. Asn324 and Asn340 each carry an N-linked (GlcNAc...) asparagine glycan. Residue 357-361 coordinates substrate; sequence GAMEN. Residue His393 coordinates Zn(2+). The active-site Proton acceptor is the Glu394. Zn(2+)-binding residues include His397 and Glu416. 9 N-linked (GlcNAc...) asparagine glycosylation sites follow: Asn554, Asn589, Asn597, Asn607, Asn678, Asn763, Asn773, Asn801, and Asn828. Residue Arg887 coordinates substrate.

It belongs to the peptidase M1 family. Homodimer; disulfide-linked. It depends on Zn(2+) as a cofactor. Expressed in choriocarcinoma cancer cell lines (at protein level). Expressed by epithelial cells of the proximal tubule cells and the glomerulus of the nephron. Also found in a variety of other tissues.

It is found in the cell membrane. It carries out the reaction Release of N-terminal glutamate (and to a lesser extent aspartate) from a peptide.. With respect to regulation, substrate specificity is modulated by calcium which enhances the enzymatic activity for cleavage of acidic residues while reducing its activity with basic residues. Inhibited by aminopeptidase inhibitors amastatin and bestatin. Functionally, regulates central hypertension through its calcium-modulated preference to cleave N-terminal acidic residues from peptides such as angiotensin II. In Homo sapiens (Human), this protein is Glutamyl aminopeptidase (ENPEP).